A 478-amino-acid polypeptide reads, in one-letter code: Sulfate adenylyltransferase subunit 1 (478 aa).

The region spanning 28–244 (KTMLRFLTCG…LESVDVVNAS (217 aa)) is the tr-type G domain. The tract at residues 37–44 (GSVDDGKS) is G1. 37-44 (GSVDDGKS) is a binding site for GTP. The G2 stretch occupies residues 95 to 99 (GITID). The segment at 116-119 (DTPG) is G3. GTP is bound by residues 116-120 (DTPGH) and 171-174 (NKMD). Residues 171–174 (NKMD) form a G4 region. The tract at residues 209-211 (SAL) is G5.

The protein belongs to the TRAFAC class translation factor GTPase superfamily. Classic translation factor GTPase family. CysN/NodQ subfamily. In terms of assembly, heterodimer composed of CysD, the smaller subunit, and CysN.

The enzyme catalyses sulfate + ATP + H(+) = adenosine 5'-phosphosulfate + diphosphate. Its pathway is sulfur metabolism; hydrogen sulfide biosynthesis; sulfite from sulfate: step 1/3. Functionally, with CysD forms the ATP sulfurylase (ATPS) that catalyzes the adenylation of sulfate producing adenosine 5'-phosphosulfate (APS) and diphosphate, the first enzymatic step in sulfur assimilation pathway. APS synthesis involves the formation of a high-energy phosphoric-sulfuric acid anhydride bond driven by GTP hydrolysis by CysN coupled to ATP hydrolysis by CysD. This Yersinia enterocolitica serotype O:8 / biotype 1B (strain NCTC 13174 / 8081) protein is Sulfate adenylyltransferase subunit 1.